The following is a 63-amino-acid chain: Large ribosomal subunit protein bL32 (63 aa).

Residues 1–23 form a disordered region; sequence MATPKAKVSKSRRDKRRAQFTAR. Basic residues predominate over residues 7-18; sequence KVSKSRRDKRRA.

Belongs to the bacterial ribosomal protein bL32 family.

This is Large ribosomal subunit protein bL32 from Prosthecochloris aestuarii (strain DSM 271 / SK 413).